The sequence spans 255 residues: MKSITTASFALILFGVGAASADHASRVLVLGGGAVPSGTKTYTTGIRATIDGDSFCGGSLISPTHVLTTTACIGYTKPANWVSVGTHYLNGTHDGEQIKVVSAQNHTGFNSTSGSYDVALLRLERPSKFMPVKLPAADDSDVIPGMRSSLVGWGYTSYPNGTKAYELQGVGLEVWSNTDCARIYSLDDTMVCAGGGVGKDSCNGDTGGPLIKERGPGDEDDIVVGLVSLGSRMWCGVPRSVFACVESLGMDQLGH.

An N-terminal signal peptide occupies residues 1–21 (MKSITTASFALILFGVGAASA). A Peptidase S1 domain is found at 29-255 (VLGGGAVPSG…ESLGMDQLGH (227 aa)). Cys-56 and Cys-72 are disulfide-bonded. N-linked (GlcNAc...) asparagine glycans are attached at residues Asn-90, Asn-105, Asn-110, and Asn-160. Cystine bridges form between Cys-180–Cys-192 and Cys-202–Cys-235.

Belongs to the peptidase S1 family. As to quaternary structure, forms an apoplastic complex with host endoglucanases in tomato leaves during P.infestans infection.

It is found in the secreted. Secreted effector that suppresses host plant glucan elicitor-mediated defense responses. Targets host endoglucanases and inhibits the endoglucanase-mediated release of elicitor-active glucan oligosaccharides from P.infestans cell walls. This Phytophthora infestans (Potato late blight agent) protein is Glucanase inhibitor protein 4.